Reading from the N-terminus, the 424-residue chain is S-adenosylmethionine synthase (424 aa).

Residue histidine 16 coordinates ATP. Residue aspartate 18 participates in Mg(2+) binding. Glutamate 44 is a K(+) binding site. L-methionine contacts are provided by glutamate 57 and glutamine 100. Residues 100 to 110 (QSPDIAQGVNT) form a flexible loop region. ATP contacts are provided by residues 175 to 177 (DGK), 251 to 252 (KF), aspartate 260, 266 to 267 (RK), alanine 283, and lysine 287. An L-methionine-binding site is contributed by aspartate 260. Residue lysine 291 participates in L-methionine binding.

It belongs to the AdoMet synthase family. In terms of assembly, homotetramer; dimer of dimers. It depends on Mg(2+) as a cofactor. The cofactor is K(+).

It is found in the cytoplasm. It catalyses the reaction L-methionine + ATP + H2O = S-adenosyl-L-methionine + phosphate + diphosphate. It participates in amino-acid biosynthesis; S-adenosyl-L-methionine biosynthesis; S-adenosyl-L-methionine from L-methionine: step 1/1. Functionally, catalyzes the formation of S-adenosylmethionine (AdoMet) from methionine and ATP. The overall synthetic reaction is composed of two sequential steps, AdoMet formation and the subsequent tripolyphosphate hydrolysis which occurs prior to release of AdoMet from the enzyme. The chain is S-adenosylmethionine synthase from Nostoc punctiforme (strain ATCC 29133 / PCC 73102).